Here is a 472-residue protein sequence, read N- to C-terminus: Sporozoite surface protein P36p (472 aa).

The first 23 residues, 1–23 (MMKRRRIFMYYCFCFLLKYVAFS), serve as a signal peptide directing secretion. N-linked (GlcNAc...) asparagine glycans are attached at residues N24, N29, N93, N112, and N185. 6-Cys domains are found at residues 24 to 157 (NVTN…FKKM) and 160 to 299 (KIKG…TSKN). Intrachain disulfides connect C64–C138, C81–C136, C164–C188, C202–C281, and C222–C279. N295, N306, N383, N396, N400, and N416 each carry an N-linked (GlcNAc...) asparagine glycan. A disordered region spans residues 359–385 (KMDPSDEDESNENAHNGNRANKDANYS). S449 carries GPI-anchor amidated serine lipidation. Residues 450–472 (SSYYEVFNYFSIAFILIIHMLLW) constitute a propeptide, removed in mature form.

It is found in the cell surface. The protein resides in the cell membrane. Its function is as follows. Involved in sporozoite infection of hepatocytes and replication therein. This Plasmodium berghei (strain Anka) protein is Sporozoite surface protein P36p (P52).